Reading from the N-terminus, the 394-residue chain is Protein TsgA homolog (394 aa).

A run of 12 helical transmembrane segments spans residues 11 to 31, 51 to 71, 76 to 96, 101 to 121, 134 to 154, 162 to 182, 206 to 226, 246 to 266, 274 to 294, 302 to 322, 334 to 354, and 363 to 383; these read WISY…GMVM, FLNA…EIIP, LVFG…GHNL, ISMF…TFLI, LLFT…AAAI, WYWV…LTLC, MGVL…LGFI, QLVS…SFIL, IVTV…STNN, ILAL…LGSL, FILT…GPIV, and LATA…LGFF.

The protein belongs to the major facilitator superfamily. TsgA family.

It is found in the cell inner membrane. The protein is Protein TsgA homolog of Yersinia enterocolitica serotype O:8 / biotype 1B (strain NCTC 13174 / 8081).